A 246-amino-acid polypeptide reads, in one-letter code: Acetoacetate decarboxylase (246 aa).

The active-site Schiff-base intermediate with acetoacetate is K116.

This sequence belongs to the ADC family.

The enzyme catalyses acetoacetate + H(+) = acetone + CO2. Functionally, catalyzes the conversion of acetoacetate to acetone and carbon dioxide. In Bordetella avium (strain 197N), this protein is Acetoacetate decarboxylase.